Consider the following 833-residue polypeptide: Homeobox-leucine zipper protein ATHB-8 (833 aa).

The segment at residues 12–75 (DNGKYVRYTP…NRRCREKQRK (64 aa)) is a DNA-binding region (homeobox). Positions 70-108 (REKQRKEASRLQAVNRKLTAMNKLLMEENDRLQKQVSHL) form a coiled coil. Positions 150–378 (RDASPAGLLS…ISQEISQPNV (229 aa)) constitute an START domain.

The protein belongs to the HD-ZIP homeobox family. Class III subfamily. In terms of assembly, interacts with ESR1 and ESR2. Interacts with ZPR3.

The protein resides in the nucleus. Probable transcription factor involved in the regulation of vascular development. May promote differentiation of precambial and cambial cells. The protein is Homeobox-leucine zipper protein ATHB-8 (ATHB-8) of Arabidopsis thaliana (Mouse-ear cress).